The following is a 193-amino-acid chain: 7-methyl-GTP pyrophosphatase (193 aa).

Catalysis depends on D68, which acts as the Proton acceptor.

The protein belongs to the Maf family. YceF subfamily. A divalent metal cation serves as cofactor.

The protein resides in the cytoplasm. It carries out the reaction N(7)-methyl-GTP + H2O = N(7)-methyl-GMP + diphosphate + H(+). In terms of biological role, nucleoside triphosphate pyrophosphatase that hydrolyzes 7-methyl-GTP (m(7)GTP). May have a dual role in cell division arrest and in preventing the incorporation of modified nucleotides into cellular nucleic acids. The sequence is that of 7-methyl-GTP pyrophosphatase from Chromobacterium violaceum (strain ATCC 12472 / DSM 30191 / JCM 1249 / CCUG 213 / NBRC 12614 / NCIMB 9131 / NCTC 9757 / MK).